Reading from the N-terminus, the 305-residue chain is Uracil-DNA glycosylase (305 aa).

The Proton acceptor role is filled by D148.

This sequence belongs to the uracil-DNA glycosylase (UDG) superfamily. UNG family.

It is found in the host nucleus. It carries out the reaction Hydrolyzes single-stranded DNA or mismatched double-stranded DNA and polynucleotides, releasing free uracil.. Functionally, excises uracil residues from the DNA which can arise as a result of misincorporation of dUMP residues by DNA polymerase or deamination of cytosines. Therefore may reduce deleterious uracil incorporation into the viral genome, particularly in terminally differentiated cells which lack DNA repair enzymes. This chain is Uracil-DNA glycosylase, found in Varicella-zoster virus (strain Dumas) (HHV-3).